The sequence spans 278 residues: Ras-related protein rapC (278 aa).

Residue 10-17 (GASGTGKT) participates in GTP binding. Residues 32–40 (YDPTIEDLY) carry the Effector region motif. GTP is bound by residues 58–62 (DTSGT) and 119–122 (NKCD). Disordered regions lie at residues 176 to 209 (NGSSNGKDKKDKKEKKTHKKDSGSNNSSINSSSS) and 236 to 278 (STSS…CLIM). Low complexity-rich tracts occupy residues 198-209 (GSNNSSINSSSS) and 236-251 (STSSTSVNNLNQSQTN). Cysteine methyl ester is present on cysteine 275. Cysteine 275 is lipidated: S-geranylgeranyl cysteine. Positions 276 to 278 (LIM) are cleaved as a propeptide — removed in mature form.

It belongs to the small GTPase superfamily. Ras family.

The protein resides in the cell membrane. The enzyme catalyses GTP + H2O = GDP + phosphate + H(+). The protein is Ras-related protein rapC (rapC) of Dictyostelium discoideum (Social amoeba).